The chain runs to 383 residues: Probable aspartate/prephenate aminotransferase (383 aa).

Residues glycine 39, tryptophan 125, and asparagine 175 each contribute to the L-aspartate site. An N6-(pyridoxal phosphate)lysine modification is found at lysine 234. Arginine 361 serves as a coordination point for L-aspartate.

Belongs to the class-I pyridoxal-phosphate-dependent aminotransferase family. In terms of assembly, homodimer. Pyridoxal 5'-phosphate serves as cofactor.

The protein resides in the cytoplasm. The enzyme catalyses L-aspartate + 2-oxoglutarate = oxaloacetate + L-glutamate. It carries out the reaction L-arogenate + oxaloacetate = prephenate + L-aspartate. In terms of biological role, catalyzes the reversible conversion of aspartate and 2-oxoglutarate to glutamate and oxaloacetate. Can also transaminate prephenate in the presence of aspartate. The protein is Probable aspartate/prephenate aminotransferase (aspC) of Thermus aquaticus.